The sequence spans 476 residues: Transmembrane transporter FPSE_08127 (476 aa).

The chain crosses the membrane as a helical span at residues 72-92 (ILAIPAALGALGSIGGSLCII). An N-linked (GlcNAc...) asparagine glycan is attached at N111. Transmembrane regions (helical) follow at residues 133-153 (LVGV…VVAI), 164-184 (GTCT…FSAI), 192-212 (WLTW…VVAV), 231-251 (WAPI…NIFI), 275-295 (ACLV…LVIY), 317-337 (VAYG…QHVA), 364-384 (LGIN…VPIL), 387-407 (LLGL…PALL), and 431-451 (LIMM…VVLI).

It belongs to the amino acid/polyamine transporter 2 family.

It localises to the membrane. Its function is as follows. Transmembrane transporter; part of the Fusarium detoxification of benzoxazolinone cluster involved in the degradation of benzoxazolinones produced by the host plant. Maize, wheat, and rye produce the 2 benzoxazinone phytoanticipins 2,4-dihy-droxy-7-methoxy-1,4-benzoxazin-3-one (DIMBOA) and 2,4-dihydroxy-1,4-benzoxazin-3-one (DIBOA) that, due to their inherent instability once released, spontaneously degrade to the more stable corresponding benzoxazolinones, 6-methoxy-2-benzoxazolinone (MBOA) and 2-benzoxazolinone (BOA), respectively. FPSE_08127 is proposed to shuttle metabolites of benzoxazolinone degradation. The polypeptide is Transmembrane transporter FPSE_08127 (Fusarium pseudograminearum (strain CS3096) (Wheat and barley crown-rot fungus)).